A 256-amino-acid polypeptide reads, in one-letter code: Transcription factor bHLH131 (256 aa).

A bHLH domain is found at 91-140 (VAAKKHSDAERRRRLRINSQFATLRTILPNLVKQDKASVLGETVRYFNEL).

As to quaternary structure, homodimer.

It localises to the nucleus. The chain is Transcription factor bHLH131 (BHLH131) from Arabidopsis thaliana (Mouse-ear cress).